The primary structure comprises 504 residues: ATP synthase subunit alpha 2 (504 aa).

Residue 169-176 (GDRQTGKT) coordinates ATP.

The protein belongs to the ATPase alpha/beta chains family. F-type ATPases have 2 components, CF(1) - the catalytic core - and CF(0) - the membrane proton channel. CF(1) has five subunits: alpha(3), beta(3), gamma(1), delta(1), epsilon(1). CF(0) has three main subunits: a(1), b(2) and c(9-12). The alpha and beta chains form an alternating ring which encloses part of the gamma chain. CF(1) is attached to CF(0) by a central stalk formed by the gamma and epsilon chains, while a peripheral stalk is formed by the delta and b chains.

Its subcellular location is the cell membrane. The catalysed reaction is ATP + H2O + 4 H(+)(in) = ADP + phosphate + 5 H(+)(out). Its function is as follows. Produces ATP from ADP in the presence of a proton gradient across the membrane. The alpha chain is a regulatory subunit. This chain is ATP synthase subunit alpha 2, found in Listeria welshimeri serovar 6b (strain ATCC 35897 / DSM 20650 / CCUG 15529 / CIP 8149 / NCTC 11857 / SLCC 5334 / V8).